The sequence spans 359 residues: GTPase Obg (359 aa).

The Obg domain maps to 1–159 (MQFIDQAEIQ…RSLRLELKLL (159 aa)). The region spanning 160 to 328 (AEVGIIGLPN…LLHQIWQELE (169 aa)) is the OBG-type G domain. Residues 166 to 173 (GLPNAGKS), 191 to 195 (FTTLV), 213 to 216 (DIPG), 280 to 283 (NKID), and 309 to 311 (SAI) each bind GTP. Mg(2+) is bound by residues Ser173 and Thr193.

This sequence belongs to the TRAFAC class OBG-HflX-like GTPase superfamily. OBG GTPase family. In terms of assembly, monomer. It depends on Mg(2+) as a cofactor.

The protein resides in the cytoplasm. An essential GTPase which binds GTP, GDP and possibly (p)ppGpp with moderate affinity, with high nucleotide exchange rates and a fairly low GTP hydrolysis rate. Plays a role in control of the cell cycle, stress response, ribosome biogenesis and in those bacteria that undergo differentiation, in morphogenesis control. The chain is GTPase Obg from Cyanothece sp. (strain PCC 7425 / ATCC 29141).